The following is a 327-amino-acid chain: PDZ and LIM domain protein 1 (327 aa).

Position 2 is an N-acetylthreonine (Thr-2). The region spanning 3-85 (TQQIVLQGPG…NMTLTVSRSE (83 aa)) is the PDZ domain. 2 positions are modified to phosphoserine: Ser-90 and Ser-130. At Tyr-142 the chain carries Phosphotyrosine. Residues 161-184 (VESKTSASGEEANSRPVVQPHPSG) form a disordered region. Residues 256–315 (PICDKCGTGIVGVFVKLRDHHRHPECYVCTDCGINLKQKGHFFVEDQIYCEKHARERVTP) enclose the LIM zinc-binding domain. Residues Cys-258, Cys-261, His-278, Cys-281, Cys-284, Cys-287, Cys-305, and His-308 each contribute to the Zn(2+) site. The residue at position 314 (Thr-314) is a Phosphothreonine. Residue Tyr-319 is modified to Phosphotyrosine.

As to quaternary structure, interacts with ACTN1, ACTN2 and ACTN4. Interacts with PDLIM4. As to expression, expressed in heart, lung, spleen, testis and skeletal muscle.

Its subcellular location is the cytoplasm. It localises to the cytoskeleton. The protein localises to the myofibril. The protein resides in the sarcomere. It is found in the z line. Cytoskeletal protein that may act as an adapter that brings other proteins (like kinases) to the cytoskeleton. Involved in assembly, disassembly and directioning of stress fibers in fibroblasts. Required for the localization of ACTN1 and PALLD to stress fibers. Required for cell migration and in maintaining cell polarity of fibroblasts. This Mus musculus (Mouse) protein is PDZ and LIM domain protein 1 (Pdlim1).